The following is a 370-amino-acid chain: Aminomethyltransferase (370 aa).

Belongs to the GcvT family. The glycine cleavage system is composed of four proteins: P, T, L and H.

It carries out the reaction N(6)-[(R)-S(8)-aminomethyldihydrolipoyl]-L-lysyl-[protein] + (6S)-5,6,7,8-tetrahydrofolate = N(6)-[(R)-dihydrolipoyl]-L-lysyl-[protein] + (6R)-5,10-methylene-5,6,7,8-tetrahydrofolate + NH4(+). Its function is as follows. The glycine cleavage system catalyzes the degradation of glycine. This is Aminomethyltransferase from Clostridium botulinum (strain Kyoto / Type A2).